A 582-amino-acid chain; its full sequence is Cryptochrome-2 (582 aa).

The Photolyase/cryptochrome alpha/beta domain occupies 12–141; the sequence is CRSVHWFRRG…EVVIENSHTL (130 aa). FAD-binding positions include Ser261, Gln298, His364, and 396–398; that span reads DAD. Residues 521-559 form a disordered region; the sequence is GPVTDSAPGQGSSTSTAVRLPQSDQASPKRKHEGAEELC. The span at 527–546 shows a compositional bias: polar residues; the sequence is APGQGSSTSTAVRLPQSDQA.

This sequence belongs to the DNA photolyase class-1 family. As to quaternary structure, component of the circadian core oscillator, which includes the CRY proteins, CLOCK or NPAS2, BMAL1 or BMAL2, CSNK1E, and the PER proteins. It depends on FAD as a cofactor. The cofactor is (6R)-5,10-methylene-5,6,7,8-tetrahydrofolate. Expressed in the pineal gland.

It localises to the cytoplasm. The protein resides in the nucleus. In terms of biological role, transcriptional repressor which forms a core component of the circadian clock. The circadian clock, an internal time-keeping system, regulates various physiological processes through the generation of approximately 24 hour circadian rhythms in gene expression, which are translated into rhythms in metabolism and behavior. It is derived from the Latin roots 'circa' (about) and 'diem' (day) and acts as an important regulator of a wide array of physiological functions including metabolism, sleep, body temperature, blood pressure, endocrine, immune, cardiovascular, and renal function. Consists of two major components: the central clock, residing in the suprachiasmatic nucleus (SCN) of the brain, and the peripheral clocks that are present in nearly every tissue and organ system. Both the central and peripheral clocks can be reset by environmental cues, also known as Zeitgebers (German for 'timegivers'). The predominant Zeitgeber for the central clock is light, which is sensed by retina and signals directly to the SCN. The central clock entrains the peripheral clocks through neuronal and hormonal signals, body temperature and feeding-related cues, aligning all clocks with the external light/dark cycle. Circadian rhythms allow an organism to achieve temporal homeostasis with its environment at the molecular level by regulating gene expression to create a peak of protein expression once every 24 hours to control when a particular physiological process is most active with respect to the solar day. Transcription and translation of core clock components (CLOCK, NPAS2, BMAL1, BMAL2, PER1, PER2, PER3, CRY1 and CRY2) plays a critical role in rhythm generation, whereas delays imposed by post-translational modifications (PTMs) are important for determining the period (tau) of the rhythms (tau refers to the period of a rhythm and is the length, in time, of one complete cycle). A diurnal rhythm is synchronized with the day/night cycle, while the ultradian and infradian rhythms have a period shorter and longer than 24 hours, respectively. Disruptions in the circadian rhythms contribute to the pathology of cardiovascular diseases, cancer, metabolic syndromes and aging. A transcription/translation feedback loop (TTFL) forms the core of the molecular circadian clock mechanism. Transcription factors, CLOCK or NPAS2 and BMAL1 or BMAL2, form the positive limb of the feedback loop, act in the form of a heterodimer and activate the transcription of core clock genes and clock-controlled genes (involved in key metabolic processes), harboring E-box elements (5'-CACGTG-3') within their promoters. The core clock genes: PER1/2/3 and CRY1/2 which are transcriptional repressors form the negative limb of the feedback loop and interact with the CLOCK|NPAS2-BMAL1|BMAL2 heterodimer inhibiting its activity and thereby negatively regulating their own expression. This heterodimer also activates nuclear receptors NR1D1/2, RORA/B/G, which form a second feedback loop and which activate and repress BMAL1 transcription, respectively. CRY1 and CRY2 have redundant functions but also differential and selective contributions at least in defining the pace of the SCN circadian clock and its circadian transcriptional outputs. Less potent transcriptional repressor in cerebellum and liver than CRY1, though less effective in lengthening the period of the SCN oscillator. Seems to play a critical role in tuning SCN circadian period by opposing the action of CRY1. With CRY1, dispensable for circadian rhythm generation but necessary for the development of intercellular networks for rhythm synchrony. Represses CLOCK-BMAL1-mediated transcriptional activation. The chain is Cryptochrome-2 (CRY2) from Gallus gallus (Chicken).